Reading from the N-terminus, the 1346-residue chain is MDNKRDKAKAGAAARTPAARAPGLLTPRPPGSPRPPPPVTPAALRVLGAAGAVGRKPLAERAGGIGGATIPESAPRAGPTRSAGTSSRNPASRPPASGRGERAPPAKNTSPGPVSSPGRASGTTRPGPLGQKGLRISAEETVARGKATEAPKRSALSAGARRDTSGPTPGTPSPAMARRSRAAGTEVGLPRPAPSARPRPPTEGPRKSVSSASEHSTTEPSPAARRRPSAGGGLQRPASRSLSSSATPLSSPARSGPSARGTPRAPAHPSQPKPKGLQALRPPQVTPPRKDAAPALGPLSSSPLATPSPSGTKARPVPPPDNAATPLPATLPPSPPVTPPPPAALQSQAPPTLPATPHSSSLTCQLATPLPLAPPSPSAPPSLQTLPSPPATPPSQVPPTQLIMSFPEAGVSSLATAAFVASVSPSVSSPLQSMPPTQANPALPSLPTLLSPLATPPLSAMSPLQGPVSPATSLGNSAFPLAALPQPGLSALTTPPPQASPSPSPPSLQATPHTLATLPLQDSPLLATLPLQASPSPLTTVSLQDPPLVSPSLLASPPLQAPPHPQAPPSMTTPPMQAPPSLQTIPPIQVPHSLTSPSLQAPPSPLALSSLQATTSLGSPTLQATHSFLTMSPRQTQASLISPSRPASTPPDSPPLQAPLSLPASPPLQTSLSPAVSPLSSPLTIHPLQALSSLASHSPQAPLSSLIMPPLETQSSLAPPSLQTPPASLTTPPLENLPSLAPPPLQTASAPLTTPPLENLPSLAPPPLQTASAPLTTPHLETPPCPAPCPLQAPPSPLTTPPPETPSSIATPPPQAPPALASPPLQGLPSPPLSPLATPPPQAPPALALPPLQAPPSPPASPPLSPLATPSPQAPNALAVHLLQAPFSPPPSPPVQAPFSPPASPPVSPSATPPSQAPPSLAAPPLQVPPSPPASPPMSPSATPPPQAPPPLAAPPLQVPPSPPASPPMSPSATPPPRVPPLLAAPPLQVPPSPPASLPMSPLAKPPPQAPPALATPPLQALPSPPASFPGQAPFSPSASLPMSPLATPPPQAPPVLAAPLLQVPPSPPASPTLQAPRRPPTPGPDTSVSGPRLTLALAPGPPPPPSRSPSSTLSGPDLAGHSSSATSTPEELRGYDSGPEGGAAASPPPDAELAACHPAAWSRGPAPPLAFRGAPGAPLPWPPATGPGSADGLCTIYETEGPESATPAPGALDPGPSPGTSGGKAAAGAGAGASSRSPKQARLGELPLGALQASVVQHLLSRTLLLAAAEGAAGGSGGGPGGAEGGGVTGGARAALSDAELGRWAELLSPLDESRASITSVTSFSPDDVASPQGDWTVVEVETFH.

Disordered stretches follow at residues 1–403, 426–512, 537–606, 633–679, 711–1155, and 1168–1240; these read MDNK…TQLI, SVSS…QATP, PLTT…PSPL, PRQT…VSPL, LETQ…AELA, and PPLA…RSPK. Residues 10-26 show a composition bias toward low complexity; the sequence is AGAAARTPAARAPGLLT. A compositionally biased stretch (pro residues) spans 27-40; sequence PRPPGSPRPPPPVT. Low complexity-rich tracts occupy residues 41-55 and 86-97; these read PAAL…AVGR and SSRNPASRPPAS. The span at 137–152 shows a compositional bias: basic and acidic residues; the sequence is SAEETVARGKATEAPK. Residues 165-177 show a composition bias toward low complexity; the sequence is SGPTPGTPSPAMA. Over residues 191-203 the composition is skewed to pro residues; sequence RPAPSARPRPPTE. Polar residues predominate over residues 208-220; it reads SVSSASEHSTTEP. 2 stretches are compositionally biased toward low complexity: residues 235 to 255 and 293 to 312; these read QRPA…PARS and APAL…PSGT. 3 stretches are compositionally biased toward pro residues: residues 329–343, 371–380, and 387–397; these read ATLP…PPPA, PLAPPSPSAP, and PSPPATPPSQV. The segment covering 426 to 464 has biased composition (low complexity); that stretch reads SVSSPLQSMPPTQANPALPSLPTLLSPLATPPLSAMSPL. A compositionally biased stretch (pro residues) spans 494–506; sequence TPPPQASPSPSPP. Low complexity predominate over residues 546 to 558; the sequence is PPLVSPSLLASPP. Residues 559–578 are compositionally biased toward pro residues; it reads LQAPPHPQAPPSMTTPPMQA. Residues 633-647 show a composition bias toward polar residues; sequence PRQTQASLISPSRPA. Pro residues predominate over residues 648 to 657; sequence STPPDSPPLQ. The span at 658 to 679 shows a compositional bias: low complexity; it reads APLSLPASPPLQTSLSPAVSPL. Residues 724 to 733 are compositionally biased toward polar residues; sequence TPPASLTTPP. Pro residues-rich tracts occupy residues 781-821 and 829-865; these read ETPP…PALA and PSPP…PPLS. Positions 866 to 875 are enriched in low complexity; it reads PLATPSPQAP. Pro residues-rich tracts occupy residues 887–917, 926–997, and 1004–1015; these read FSPP…PSQA, LQVP…PPAS, and AKPPPQAPPALA. 3 stretches are compositionally biased toward low complexity: residues 1029-1046, 1137-1146, and 1224-1239; these read FPGQ…MSPL, DSGPEGGAAA, and GKAA…SRSP. A Phosphoserine modification is found at Ser1310.

This Homo sapiens (Human) protein is Proline-rich protein 36.